A 218-amino-acid chain; its full sequence is Pyridoxine/pyridoxamine 5'-phosphate oxidase (218 aa).

Substrate is bound by residues 12–15 and Arg70; that span reads RMSY. FMN contacts are provided by residues 65-70, 80-81, Lys87, and Gln109; these read RTVLLR and YT. Residues Tyr127, Arg131, and Ser135 each coordinate substrate. FMN contacts are provided by residues 145–146 and Trp191; that span reads QS. 197–199 lines the substrate pocket; that stretch reads RLH. FMN is bound at residue Arg201.

The protein belongs to the pyridoxamine 5'-phosphate oxidase family. Homodimer. FMN is required as a cofactor.

It carries out the reaction pyridoxamine 5'-phosphate + O2 + H2O = pyridoxal 5'-phosphate + H2O2 + NH4(+). The catalysed reaction is pyridoxine 5'-phosphate + O2 = pyridoxal 5'-phosphate + H2O2. It functions in the pathway cofactor metabolism; pyridoxal 5'-phosphate salvage; pyridoxal 5'-phosphate from pyridoxamine 5'-phosphate: step 1/1. Its pathway is cofactor metabolism; pyridoxal 5'-phosphate salvage; pyridoxal 5'-phosphate from pyridoxine 5'-phosphate: step 1/1. Functionally, catalyzes the oxidation of either pyridoxine 5'-phosphate (PNP) or pyridoxamine 5'-phosphate (PMP) into pyridoxal 5'-phosphate (PLP). The protein is Pyridoxine/pyridoxamine 5'-phosphate oxidase of Acinetobacter baylyi (strain ATCC 33305 / BD413 / ADP1).